A 416-amino-acid polypeptide reads, in one-letter code: 3-oxoacyl-[acyl-carrier-protein] synthase 1 (416 aa).

Residues 11 to 415 enclose the Ketosynthase family 3 (KS3) domain; sequence FPSVVVTAVT…GHNVALAFGR (405 aa). Residues cysteine 171, histidine 311, and histidine 345 each act as for beta-ketoacyl synthase activity in the active site. Positions 311 and 345 each coordinate substrate.

This sequence belongs to the thiolase-like superfamily. Beta-ketoacyl-ACP synthases family.

It localises to the cytoplasm. It carries out the reaction an ultra-long-chain mono-unsaturated fatty acyl-[ACP] + malonyl-[ACP] + H(+) = a 3-oxo-ultra-long-chain mono-unsaturated fatty acyl-[ACP] + holo-[ACP] + CO2. Its pathway is lipid metabolism; mycolic acid biosynthesis. In terms of biological role, part of the mycobacterial fatty acid elongation system FAS-II, which is involved in mycolic acid biosynthesis. Catalyzes the elongation of long chain acyl-ACP substrates by the addition of two carbons from malonyl-ACP to an acyl acceptor. Involved in the initial extension of the mycolate chain and forms monounsaturated fatty acids that averaged 40 carbons in length. In Mycobacterium leprae (strain TN), this protein is 3-oxoacyl-[acyl-carrier-protein] synthase 1 (kasA).